A 267-amino-acid chain; its full sequence is 4-hydroxy-tetrahydrodipicolinate reductase (267 aa).

Residues 8–13 (GAAGRM) and aspartate 34 each bind NAD(+). Residue arginine 35 participates in NADP(+) binding. Residues 98–100 (GTT) and 122–125 (AANF) each bind NAD(+). Catalysis depends on histidine 155, which acts as the Proton donor/acceptor. Histidine 156 contacts (S)-2,3,4,5-tetrahydrodipicolinate. The active-site Proton donor is lysine 159. 165 to 166 (GT) serves as a coordination point for (S)-2,3,4,5-tetrahydrodipicolinate.

Belongs to the DapB family.

It localises to the cytoplasm. It catalyses the reaction (S)-2,3,4,5-tetrahydrodipicolinate + NAD(+) + H2O = (2S,4S)-4-hydroxy-2,3,4,5-tetrahydrodipicolinate + NADH + H(+). The catalysed reaction is (S)-2,3,4,5-tetrahydrodipicolinate + NADP(+) + H2O = (2S,4S)-4-hydroxy-2,3,4,5-tetrahydrodipicolinate + NADPH + H(+). It functions in the pathway amino-acid biosynthesis; L-lysine biosynthesis via DAP pathway; (S)-tetrahydrodipicolinate from L-aspartate: step 4/4. In terms of biological role, catalyzes the conversion of 4-hydroxy-tetrahydrodipicolinate (HTPA) to tetrahydrodipicolinate. This chain is 4-hydroxy-tetrahydrodipicolinate reductase, found in Pseudomonas putida (strain GB-1).